A 433-amino-acid polypeptide reads, in one-letter code: Zuotin (433 aa).

Position 50 is a phosphoserine (serine 50). Residues 98 to 170 (LYAAMGLSKL…RAQYDSCDFV (73 aa)) form the J domain. A compositionally biased stretch (basic and acidic residues) spans 292 to 330 (EEKKEKERRKWEREAGARAEAEAKAKAEAEAKAKAESEA). The disordered stretch occupies residues 292–357 (EEKKEKERRK…KAAKKKNKRA (66 aa)).

As to quaternary structure, RAC is a heterodimer of the Hsp70/DnaK-type chaperone SSZ1 and the Hsp40/DnaJ-type chaperone ZUO1. RAC associates with ribosomes via ZUO1.

It localises to the cytoplasm. Component of the ribosome-associated complex (RAC), a heterodimeric chaperone complex involved in regulation of accurate translation termination and in folding or maintaining nascent polypeptides in a folding-competent state. RAC stimulates the ATPase activity of the ribosome-associated pool of Hsp70-type chaperones SSB1/SSB2 that bind to the nascent polypeptide chain. ZUO1 can act as a J-protein for SSB1/SSB2 only when associated with SSZ1. The polypeptide is Zuotin (ZUO1) (Saccharomyces cerevisiae (strain ATCC 204508 / S288c) (Baker's yeast)).